Reading from the N-terminus, the 331-residue chain is DNA-directed RNA polymerase subunit alpha (331 aa).

Residues 1 to 233 are alpha N-terminal domain (alpha-NTD); it reads MVREKVTVST…DLFIPFLHAE (233 aa). Residues 265–331 are alpha C-terminal domain (alpha-CTD); the sequence is KEIELKYIFI…GILEKHFTID (67 aa).

It belongs to the RNA polymerase alpha chain family. In terms of assembly, in plastids the minimal PEP RNA polymerase catalytic core is composed of four subunits: alpha, beta, beta', and beta''. When a (nuclear-encoded) sigma factor is associated with the core the holoenzyme is formed, which can initiate transcription.

It is found in the plastid. The protein resides in the chloroplast. The enzyme catalyses RNA(n) + a ribonucleoside 5'-triphosphate = RNA(n+1) + diphosphate. Its function is as follows. DNA-dependent RNA polymerase catalyzes the transcription of DNA into RNA using the four ribonucleoside triphosphates as substrates. The chain is DNA-directed RNA polymerase subunit alpha from Vitis vinifera (Grape).